The sequence spans 144 residues: L-fucose mutarotase (144 aa).

The active-site Proton donor is the H22. Residues D30, R109, and 131 to 133 each bind substrate; that span reads YGN.

This sequence belongs to the RbsD / FucU family. FucU mutarotase subfamily. As to quaternary structure, homodecamer.

Its subcellular location is the cytoplasm. The enzyme catalyses alpha-L-fucose = beta-L-fucose. The protein operates within carbohydrate metabolism; L-fucose metabolism. Involved in the anomeric conversion of L-fucose. The polypeptide is L-fucose mutarotase (Haemophilus influenzae (strain PittEE)).